Here is a 358-residue protein sequence, read N- to C-terminus: Alanine racemase, biosynthetic (358 aa).

The active-site Proton acceptor; specific for D-alanine is the Lys-34. N6-(pyridoxal phosphate)lysine is present on Lys-34. Arg-130 serves as a coordination point for substrate. Tyr-254 acts as the Proton acceptor; specific for L-alanine in catalysis. Met-302 provides a ligand contact to substrate.

Belongs to the alanine racemase family. The cofactor is pyridoxal 5'-phosphate.

The catalysed reaction is L-alanine = D-alanine. Its pathway is amino-acid biosynthesis; D-alanine biosynthesis; D-alanine from L-alanine: step 1/1. The protein operates within cell wall biogenesis; peptidoglycan biosynthesis. Its function is as follows. Catalyzes the interconversion of L-alanine and D-alanine. Provides the D-alanine required for cell wall biosynthesis. The polypeptide is Alanine racemase, biosynthetic (alr) (Pseudomonas aeruginosa (strain ATCC 15692 / DSM 22644 / CIP 104116 / JCM 14847 / LMG 12228 / 1C / PRS 101 / PAO1)).